We begin with the raw amino-acid sequence, 1459 residues long: ARF guanine-nucleotide exchange factor 2 (1459 aa).

Phosphoserine occurs at positions 46 and 284. An SEC7 domain is found at 570-714; that stretch reads FNEKPKKGIP…IIMLNTDLHN (145 aa). Positions 1412–1459 are disordered; sequence EKGNGSSSHGSAHEQTPESNDVEIEATAPIDDNTDDDNKPKLSDVEKD. The span at 1447–1459 shows a compositional bias: basic and acidic residues; it reads DDNKPKLSDVEKD.

In terms of assembly, interacts (via SEC7 domain) with DRS2 (via C-terminus); the interaction is direct. Interacts with GMH1.

The protein resides in the cytoplasm. The protein localises to the cytosol. It localises to the membrane. It is found in the golgi apparatus membrane. Functionally, activates the ARF proteins by exchanging bound GDP for free GTP. Plays a role in maintaining mitochondrial morphology. Stimulates DRS2 flippase activity. This chain is ARF guanine-nucleotide exchange factor 2 (GEA2), found in Saccharomyces cerevisiae (strain ATCC 204508 / S288c) (Baker's yeast).